The primary structure comprises 124 residues: Sulfur globule protein CV2 (124 aa).

A signal peptide spans 1–22; it reads MKKLATAAAVAALLGASASASA.

In terms of assembly, the protein envelope of the sulfur globules is composed of the three different proteins CV1, CV2 and CV3.

Functionally, structural protein of the sulfur globules, which are intracellular globules that serve for sulfur storage in purple sulfur bacteria. In Allochromatium vinosum (strain ATCC 17899 / DSM 180 / NBRC 103801 / NCIMB 10441 / D) (Chromatium vinosum), this protein is Sulfur globule protein CV2 (sgpB).